The following is a 168-amino-acid chain: tRNA-splicing endonuclease (168 aa).

Catalysis depends on residues Tyr-107, His-114, and Lys-145.

The protein belongs to the tRNA-intron endonuclease family. Archaeal short subfamily. Homotetramer; although the tetramer contains four active sites, only two participate in the cleavage. Therefore, it should be considered as a dimer of dimers.

The catalysed reaction is pretRNA = a 3'-half-tRNA molecule with a 5'-OH end + a 5'-half-tRNA molecule with a 2',3'-cyclic phosphate end + an intron with a 2',3'-cyclic phosphate and a 5'-hydroxyl terminus.. Endonuclease that removes tRNA introns. Cleaves pre-tRNA at the 5'- and 3'-splice sites to release the intron. The products are an intron and two tRNA half-molecules bearing 2',3' cyclic phosphate and 5'-OH termini. Recognizes a pseudosymmetric substrate in which 2 bulged loops of 3 bases are separated by a stem of 4 bp. This chain is tRNA-splicing endonuclease, found in Thermococcus gammatolerans (strain DSM 15229 / JCM 11827 / EJ3).